Consider the following 57-residue polypeptide: Potassium channel toxin alpha-KTx 26.1 (57 aa).

A signal peptide spans 1-22 (MSRLFVFILIALFLSAIIDVMS). 3 disulfides stabilise this stretch: Cys30/Cys48, Cys34/Cys53, and Cys38/Cys55.

The protein belongs to the short scorpion toxin superfamily. Potassium channel inhibitor family. Alpha-KTx 26 subfamily. Expressed by the venom gland.

The protein localises to the secreted. Its function is as follows. Recombinant toxin that reversibly inhibits the potassium current of mKv1.3/KCNA3 channel stably expressed in COS7 cells (IC(50)=150 nM). Also shows a weak inhibition on Kv1.2/KCNA2, Kv1.3/KCNA3 and TRPV1 channels. The protein is Potassium channel toxin alpha-KTx 26.1 of Olivierus martensii (Manchurian scorpion).